The following is a 227-amino-acid chain: Probable septum site-determining protein MinC (227 aa).

Belongs to the MinC family. As to quaternary structure, interacts with MinD and FtsZ.

Cell division inhibitor that blocks the formation of polar Z ring septums. Rapidly oscillates between the poles of the cell to destabilize FtsZ filaments that have formed before they mature into polar Z rings. Prevents FtsZ polymerization. This Shouchella clausii (strain KSM-K16) (Alkalihalobacillus clausii) protein is Probable septum site-determining protein MinC.